The chain runs to 621 residues: Nitrate reductase [NADH] 1 (621 aa).

Residues 249–324 (GKEFTMSEVR…LDTYRIGELI (76 aa)) enclose the Cytochrome b5 heme-binding domain. Residues H284 and H307 each coordinate heme. Positions 361 to 473 (REKIHCRLVG…KGPLGHVEYT (113 aa)) constitute an FAD-binding FR-type domain. FAD is bound by residues 413–416 (RAYT), 430–432 (LVK), F435, 447–449 (LMT), S497, and T500.

It belongs to the nitrate reductase family. As to quaternary structure, homodimer. The cofactor is FAD. Requires heme as cofactor. It depends on Mo-molybdopterin as a cofactor.

It catalyses the reaction nitrite + NAD(+) + H2O = nitrate + NADH + H(+). Its function is as follows. Nitrate reductase is a key enzyme involved in the first step of nitrate assimilation in plants, fungi and bacteria. This chain is Nitrate reductase [NADH] 1, found in Zea mays (Maize).